We begin with the raw amino-acid sequence, 219 residues long: UPF0173 metal-dependent hydrolase Mlab_1154 (219 aa).

Belongs to the UPF0173 family.

This is UPF0173 metal-dependent hydrolase Mlab_1154 from Methanocorpusculum labreanum (strain ATCC 43576 / DSM 4855 / Z).